The following is a 286-amino-acid chain: Bifunctional protein FolD (286 aa).

NADP(+) contacts are provided by residues 166-168 and I232; that span reads GAS.

This sequence belongs to the tetrahydrofolate dehydrogenase/cyclohydrolase family. As to quaternary structure, homodimer.

It carries out the reaction (6R)-5,10-methylene-5,6,7,8-tetrahydrofolate + NADP(+) = (6R)-5,10-methenyltetrahydrofolate + NADPH. The enzyme catalyses (6R)-5,10-methenyltetrahydrofolate + H2O = (6R)-10-formyltetrahydrofolate + H(+). It participates in one-carbon metabolism; tetrahydrofolate interconversion. In terms of biological role, catalyzes the oxidation of 5,10-methylenetetrahydrofolate to 5,10-methenyltetrahydrofolate and then the hydrolysis of 5,10-methenyltetrahydrofolate to 10-formyltetrahydrofolate. The polypeptide is Bifunctional protein FolD (Vibrio parahaemolyticus serotype O3:K6 (strain RIMD 2210633)).